Here is a 454-residue protein sequence, read N- to C-terminus: Kynurenine--oxoglutarate transaminase 3 (454 aa).

A substrate-binding site is contributed by Gly-71. Residue Lys-116 is modified to N6-acetyllysine; alternate. Residue Lys-116 is modified to N6-succinyllysine; alternate. Asn-218 provides a ligand contact to substrate. N6-(pyridoxal phosphate)lysine is present on Lys-280. Residue Arg-429 coordinates substrate.

Belongs to the class-I pyridoxal-phosphate-dependent aminotransferase family. In terms of assembly, homodimer. Pyridoxal 5'-phosphate is required as a cofactor.

The catalysed reaction is L-kynurenine + 2-oxoglutarate = kynurenate + L-glutamate + H2O. It carries out the reaction L-kynurenine + glyoxylate = kynurenate + glycine + H2O. It catalyses the reaction 3-hydroxy-L-kynurenine + glyoxylate = xanthurenate + glycine + H2O. The enzyme catalyses an S-substituted L-cysteine + H2O = a thiol + pyruvate + NH4(+). The protein operates within amino-acid degradation; L-kynurenine degradation; kynurenate from L-kynurenine: step 1/2. In terms of biological role, catalyzes the irreversible transamination of the L-tryptophan metabolite L-kynurenine to form kynurenic acid (KA), an intermediate in the tryptophan catabolic pathway which is also a broad spectrum antagonist of the three ionotropic excitatory amino acid receptors among others. May catalyze the beta-elimination of S-conjugates and Se-conjugates of L-(seleno)cysteine, resulting in the cleavage of the C-S or C-Se bond. Has transaminase activity towards L-kynurenine, tryptophan, phenylalanine, serine, cysteine, methionine, histidine, glutamine and asparagine with glyoxylate as an amino group acceptor (in vitro). Has lower activity with 2-oxoglutarate as amino group acceptor (in vitro). This is Kynurenine--oxoglutarate transaminase 3 from Rattus norvegicus (Rat).